The primary structure comprises 415 residues: Serine hydroxymethyltransferase (415 aa).

(6S)-5,6,7,8-tetrahydrofolate-binding positions include leucine 117 and 121-123 (GHL). The residue at position 226 (lysine 226) is an N6-(pyridoxal phosphate)lysine. Glutamate 241 is a (6S)-5,6,7,8-tetrahydrofolate binding site.

This sequence belongs to the SHMT family. Homodimer. It depends on pyridoxal 5'-phosphate as a cofactor.

It localises to the cytoplasm. The catalysed reaction is (6R)-5,10-methylene-5,6,7,8-tetrahydrofolate + glycine + H2O = (6S)-5,6,7,8-tetrahydrofolate + L-serine. It participates in one-carbon metabolism; tetrahydrofolate interconversion. Its pathway is amino-acid biosynthesis; glycine biosynthesis; glycine from L-serine: step 1/1. In terms of biological role, catalyzes the reversible interconversion of serine and glycine with tetrahydrofolate (THF) serving as the one-carbon carrier. This reaction serves as the major source of one-carbon groups required for the biosynthesis of purines, thymidylate, methionine, and other important biomolecules. Also exhibits THF-independent aldolase activity toward beta-hydroxyamino acids, producing glycine and aldehydes, via a retro-aldol mechanism. This Bacillus subtilis (strain 168) protein is Serine hydroxymethyltransferase.